The chain runs to 308 residues: Sulfate adenylyltransferase subunit 2 (308 aa).

It belongs to the PAPS reductase family. CysD subfamily. Heterodimer composed of CysD, the smaller subunit, and CysN.

The catalysed reaction is sulfate + ATP + H(+) = adenosine 5'-phosphosulfate + diphosphate. It participates in sulfur metabolism; hydrogen sulfide biosynthesis; sulfite from sulfate: step 1/3. In terms of biological role, with CysN forms the ATP sulfurylase (ATPS) that catalyzes the adenylation of sulfate producing adenosine 5'-phosphosulfate (APS) and diphosphate, the first enzymatic step in sulfur assimilation pathway. APS synthesis involves the formation of a high-energy phosphoric-sulfuric acid anhydride bond driven by GTP hydrolysis by CysN coupled to ATP hydrolysis by CysD. The polypeptide is Sulfate adenylyltransferase subunit 2 (Chromobacterium violaceum (strain ATCC 12472 / DSM 30191 / JCM 1249 / CCUG 213 / NBRC 12614 / NCIMB 9131 / NCTC 9757 / MK)).